The primary structure comprises 185 residues: Calcium and integrin-binding family member 4 (185 aa).

3 consecutive EF-hand domains span residues 62–95 (RVNP…FSEQ), 97–132 (CPSL…LLKS), and 138–174 (DLLM…SPDF). Residues D110, N112, N114, and D121 each coordinate Ca(2+).

Interacts with ITGA2B (via C-terminus cytoplasmic tail region); the interaction is stabilized/increased in a calcium- and magnesium-dependent manner. Expressed weakly in megakaryocytes and endothelial cells.

This is Calcium and integrin-binding family member 4 (Cib4) from Mus musculus (Mouse).